The sequence spans 142 residues: Large ribosomal subunit protein uL13 (142 aa).

This sequence belongs to the universal ribosomal protein uL13 family. In terms of assembly, part of the 50S ribosomal subunit.

Its function is as follows. This protein is one of the early assembly proteins of the 50S ribosomal subunit, although it is not seen to bind rRNA by itself. It is important during the early stages of 50S assembly. The protein is Large ribosomal subunit protein uL13 of Shewanella putrefaciens (strain CN-32 / ATCC BAA-453).